The primary structure comprises 819 residues: Nuclear pore complex protein Nup93 (819 aa).

At Thr-49 the chain carries Phosphothreonine. Phosphoserine is present on residues Ser-52, Ser-66, Ser-72, Ser-75, Ser-80, Ser-430, and Ser-767.

The protein belongs to the nucleoporin interacting component (NIC) family. In terms of assembly, part of the nuclear pore complex (NPC). Component of the p62 complex, a complex composed of NUP62 and NUP54. Forms a complex with NUP35, NUP155, NUP205 and lamin B; the interaction with NUP35 is direct. Does not interact with TPR. Interacts with SMAD4 and IPO7; translocates SMAD4 to the nucleus through the NPC upon BMP7 stimulation resulting in activation of SMAD4 signaling.

It is found in the nucleus membrane. Its subcellular location is the nucleus. It localises to the nuclear pore complex. The protein localises to the nucleus envelope. Its function is as follows. Plays a role in the nuclear pore complex (NPC) assembly and/or maintenance. May anchor nucleoporins, but not NUP153 and TPR, to the NPC. During renal development, regulates podocyte migration and proliferation through SMAD4 signaling. The sequence is that of Nuclear pore complex protein Nup93 (NUP93) from Pongo abelii (Sumatran orangutan).